The primary structure comprises 381 residues: Phthiodiolone/phenolphthiodiolone dimycocerosates ketoreductase (381 aa).

It belongs to the mer family. Phthiodiolone/phenolphthiodiolone dimycocerosates ketoreductase subfamily.

In terms of biological role, catalyzes the reduction of the keto moiety of phthiodiolone dimycocerosates (DIM B) and glycosylated phenolphthiodiolone dimycocerosates to form the intermediate compounds phthiotriol and glycosylated phenolphthiotriol dimycocerosates during phthiocerol dimycocerosates (DIM A) and glycosylated phenolphthiocerol dimycocerosates (PGL) biosynthesis. This Mycobacterium tuberculosis (strain CDC 1551 / Oshkosh) protein is Phthiodiolone/phenolphthiodiolone dimycocerosates ketoreductase.